Consider the following 850-residue polypeptide: Bifunctional levopimaradiene synthase, chloroplastic (850 aa).

A chloroplast-targeting transit peptide spans 1–52 (MALPSSSLSSQIHTGATTQCIPHFHGSLNAGTSAGKRRSLYLRWGKGPSKIV). K250 contributes to the substrate binding site. Mg(2+) contacts are provided by D383 and D385. The DXDD motif motif lies at 383–386 (DIDD). K470 lines the substrate pocket. Residues D602, D606, N746, T750, and E754 each coordinate Mg(2+). Positions 602 to 606 (DDLYD) match the DDXXD motif motif.

Belongs to the terpene synthase family. Tpsd subfamily. The cofactor is Mg(2+).

Its subcellular location is the plastid. It is found in the chloroplast. The enzyme catalyses (2E,6E,10E)-geranylgeranyl diphosphate = (+)-copalyl diphosphate. It catalyses the reaction (+)-copalyl diphosphate = abieta-7,13-diene + diphosphate. It carries out the reaction (+)-copalyl diphosphate = abieta-8(14),12-diene + diphosphate. The catalysed reaction is (+)-copalyl diphosphate = neoabietadiene + diphosphate. Its pathway is terpene metabolism; oleoresin biosynthesis. In terms of biological role, involved in defensive oleoresin formation in conifers in response to insect attack or other injury. Involved in diterpene (C20) olefins biosynthesis. Bifunctional enzyme that catalyzes two sequential cyclizations of geranylgeranyl diphosphate (GGPP) to levopimaradiene. Levopimaradiene is the major products of the enzyme with abietadiene and neoabietadiene. No activity with farnesyl diphosphate (FPP) as substrate. The polypeptide is Bifunctional levopimaradiene synthase, chloroplastic (Pinus contorta (Shore pine)).